A 254-amino-acid chain; its full sequence is Low affinity immunoglobulin gamma Fc region receptor III-A (254 aa).

A signal peptide spans 1 to 16; sequence MWQLLLPTALLLLVSA. Residues 17 to 208 are Extracellular-facing; that stretch reads GMRTEDLPKA…ISSFFPPGYQ (192 aa). Ig-like C2-type domains follow at residues 24-105 and 107-189; these read PKAV…LEVH and GWLL…VNIT. C47 and C89 are disulfide-bonded. N56, N63, and N92 each carry an N-linked (GlcNAc...) asparagine glycan. Residues C128 and C172 are joined by a disulfide bond. 2 N-linked (GlcNAc...) asparagine glycosylation sites follow: N180 and N187. A helical transmembrane segment spans residues 209-229; the sequence is VSFCLVMVLLFAVDTGLYFSV. Over 230 to 254 the chain is Cytoplasmic; the sequence is KTNIRSSTRDWKDHKFKWRKDPQDK. S236 is subject to Phosphoserine; by PKC. The residue at position 237 (T237) is a Phosphothreonine; by PKC.

Forms a heterooligomeric complex with ITAM-containing signaling subunits, either a homodimer of CD247, a homodimer of FCER1G or a heterodimer of CD247 and FCER1G. Interacts (via transmembrane domain) with signaling subunits; this interaction is a prerequisite for receptor complex expression on the cell surface and intracellular signal transduction. Binds the Fc region of antigen-complexed IgG with a preference for IgG1 and IgG3 isotypes. Interacts with CD2; this interaction is involved in NK cell activation and cytotoxicity. Interacts with S100A4; this interaction inhibits PKC-dependent phosphorylation of FCGR3A. Glycosylated. Contains high mannose- and complex-type oligosaccharides. Glycosylation at Asn-180 is mandatory for high affinity binding to the Fc and for discrimination between fucosylated and afucosylated IgG glycoforms. In terms of processing, undergoes rapid ectodomain shedding upon NK cell stimulation. The soluble form is produced by a proteolytic cleavage mediated by ADAM17. Repeated stimulation causes receptor shedding, a mechanism that allows for increased NK cell motility and detachment from opsonized target cells while avoiding activation-induced NK cell apoptosis. Post-translationally, phosphorylated at RSSTR motif by PKC. The relevant physiological PKCs might be PRKCI, PRKCG, PRKCE, PRKCH and PRKCQ. As to expression, expressed in natural killer cells (at protein level). Expressed in a subset of circulating monocytes (at protein level).

The protein localises to the cell membrane. Its subcellular location is the secreted. In terms of biological role, receptor for the invariable Fc fragment of immunoglobulin gamma (IgG). Optimally activated upon binding of clustered antigen-IgG complexes displayed on cell surfaces, triggers lysis of antibody-coated cells, a process known as antibody-dependent cellular cytotoxicity (ADCC). Does not bind free monomeric IgG, thus avoiding inappropriate effector cell activation in the absence of antigenic trigger. Mediates IgG effector functions on natural killer (NK) cells. Binds antigen-IgG complexes generated upon infection and triggers NK cell-dependent cytokine production and degranulation to limit viral load and propagation. Involved in the generation of memory-like adaptive NK cells capable to produce high amounts of IFNG and to efficiently eliminate virus-infected cells via ADCC. Regulates NK cell survival and proliferation, in particular by preventing NK cell progenitor apoptosis. Fc-binding subunit that associates with CD247 and/or FCER1G adapters to form functional signaling complexes. Following the engagement of antigen-IgG complexes, triggers phosphorylation of immunoreceptor tyrosine-based activation motif (ITAM)-containing adapters with subsequent activation of phosphatidylinositol 3-kinase signaling and sustained elevation of intracellular calcium that ultimately drive NK cell activation. The ITAM-dependent signaling coupled to receptor phosphorylation by PKC mediates robust intracellular calcium flux that leads to production of pro-inflammatory cytokines, whereas in the absence of receptor phosphorylation it mainly activates phosphatidylinositol 3-kinase signaling leading to cell degranulation. Costimulates NK cells and trigger lysis of target cells independently of IgG binding. Mediates the antitumor activities of therapeutic antibodies. Upon ligation on monocytes triggers TNFA-dependent ADCC of IgG-coated tumor cells. Mediates enhanced ADCC in response to afucosylated IgGs. Functionally, (Microbial infection) Involved in Dengue virus pathogenesis via antibody-dependent enhancement (ADE) mechanism. Secondary infection with Dengue virus triggers elevated levels of afucosylated non-neutralizing IgG1s with reactivity to viral envelope/E protein. Viral antigen-IgG1 complexes bind with high affinity to FCGR3A, facilitating virus entry in myeloid cells and subsequent viral replication. The protein is Low affinity immunoglobulin gamma Fc region receptor III-A of Homo sapiens (Human).